A 183-amino-acid polypeptide reads, in one-letter code: Putative manganese efflux pump MntP (183 aa).

6 helical membrane passes run 3 to 23 (TISVLITALALSMDAMSLSIY), 43 to 63 (TFGIFQFAMALVGSLSGILFI), 66 to 86 (ISLYSKYVSFAIFLFLGLMML), 107 to 127 (LIIMGIATSLDALLVGLTFSI), 134 to 154 (FLYTVEIGVITAIIAGLGFIL), and 161 to 181 (ILGQKSHFLGAALLIFISINI).

It belongs to the MntP (TC 9.B.29) family.

The protein localises to the cell inner membrane. Functionally, probably functions as a manganese efflux pump. In Fusobacterium nucleatum subsp. nucleatum (strain ATCC 25586 / DSM 15643 / BCRC 10681 / CIP 101130 / JCM 8532 / KCTC 2640 / LMG 13131 / VPI 4355), this protein is Putative manganese efflux pump MntP.